The following is a 30-amino-acid chain: Mycofactocin precursor peptide (30 aa).

It belongs to the mycofactocin precursor peptide family. Interacts with MftB. The post-translational modifications that lead to mycofactocin involve oxidative decarboxylation of the C-terminal tyrosine residue catalyzed by MftC, introduction of a tyramine-valine cross-link, removal of the modified C-terminal dipeptide by MftE. The released dipeptide then undergoes oxidative deamination by MftD, glycosylation by MftF and methylation by an unknown enzyme.

Its function is as follows. Precursor peptide that leads to mycofactocin (MFT) after extensive post-translational modifications by enzymes encoded by adjacent genes. Mycofactocin acts as a redox cofactor of nicotinamide-dependent oxidoreductases encoded in the same locus. The chain is Mycofactocin precursor peptide from Mycobacterium ulcerans (strain Agy99).